The following is an 874-amino-acid chain: Ectonucleotide pyrophosphatase/phosphodiesterase family member 3 (874 aa).

Residues 1–11 (MDSRLALATEE) lie on the Cytoplasmic side of the membrane. Residues 12 to 30 (PIKKDSLKKYKILCVVLLA) form a helical; Signal-anchor for type II membrane protein membrane-spanning segment. Residues 31–874 (LLVIVSLGLG…TYLPTFETII (844 aa)) lie on the Extracellular side of the membrane. 2 consecutive SMB domains span residues 51-93 (QGSC…VKST) and 94-138 (QIWT…GESP). Intrachain disulfides connect C54–C58, C54–C71, C58–C89, C69–C71, C69–C82, C75–C81, C82–C89, C98–C115, C103–C133, C113–C126, C119–C125, C144–C190, and C152–C364. The Cell attachment site motif lies at 78 to 80 (RGD). The interval 160 to 544 (PVILFSMDGF…HGSLNHLLKT (385 aa)) is phosphodiesterase. Residue D167 coordinates Zn(2+). ATP is bound at residue K204. T205 lines the Zn(2+) pocket. The Nucleophile role is filled by T205. N226 contributes to the ATP binding site. N-linked (GlcNAc...) asparagine glycosylation occurs at N236. D275 contacts ATP. N-linked (GlcNAc...) asparagine glycosylation is found at N279 and N288. Y289 serves as a coordination point for ATP. Zn(2+) contacts are provided by D325, H329, D372, and H373. 6 disulfides stabilise this stretch: C380–C477, C428–C817, C561–C623, C574–C679, C576–C664, and C786–C796. N425 carries N-linked (GlcNAc...) asparagine glycosylation. Zn(2+) is bound at residue H482. N-linked (GlcNAc...) asparagine glycosylation is found at N532, N594, N687, and N701. Residues 581-874 (NTPGLEEQAN…TYLPTFETII (294 aa)) form a nuclease region. 5 residues coordinate Ca(2+): D751, N753, D755, H757, and D759. Residue N820 is glycosylated (N-linked (GlcNAc...) asparagine).

Monomer and homodimer. It depends on Zn(2+) as a cofactor. N-glycosylated. N-glycosylation is necessary for normal transport to the cell membrane, but is not the apical targeting signal. In terms of tissue distribution, detected at the tip of villi in the small intestine. Detected on basophils and mast cells (at protein level). Detected in the epithelial layer of the small intestine; expression is higher in the proximal part and lower in the distal part of the small intestine.

The protein resides in the cell membrane. The protein localises to the apical cell membrane. Its subcellular location is the secreted. It carries out the reaction a ribonucleoside 5'-triphosphate + H2O = a ribonucleoside 5'-phosphate + diphosphate + H(+). The catalysed reaction is UDP-N-acetyl-alpha-D-glucosamine + H2O = N-acetyl-alpha-D-glucosamine 1-phosphate + UMP + 2 H(+). It catalyses the reaction ATP + H2O = AMP + diphosphate + H(+). The enzyme catalyses CTP + H2O = CMP + diphosphate + H(+). It carries out the reaction GTP + H2O = GMP + diphosphate + H(+). The catalysed reaction is UTP + H2O = UMP + diphosphate + H(+). It catalyses the reaction Hydrolytically removes 5'-nucleotides successively from the 3'-hydroxy termini of 3'-hydroxy-terminated oligonucleotides.. The enzyme catalyses P(1),P(3)-bis(5'-adenosyl) triphosphate + H2O = AMP + ADP + 2 H(+). It carries out the reaction P(1),P(4)-bis(5'-adenosyl) tetraphosphate + H2O = AMP + ATP + 2 H(+). The catalysed reaction is P(1),P(5)-bis(5'-adenosyl) pentaphosphate + H2O = adenosine 5'-tetraphosphate + AMP + 2 H(+). It catalyses the reaction P(1),P(4)-bis(5'-guanosyl) tetraphosphate + H2O = GMP + GTP + 2 H(+). Hydrolase that metabolizes extracellular nucleotides, including ATP, GTP, UTP and CTP. Limits mast cells and basophils response during inflammation and during the chronic phases of allergic responses by eliminating extracellular ATP, a signaling molecule activating these cells in an autocrine manner. Metabolizes extracellular ATP in the lumen of the small intestine, and thereby prevents ATP-induced apoptosis of intestinal plasmacytoid dendritic cells. Has a broad specificity and can also hydrolyze UDP-GlcNAc into UMP and GlcNAc-1-phosphate and potentially several other intracellular nucleotide sugars, including UDP-GalNAc, CMP-NeuAc, GDP-Fuc, and UDP-GlcA. Thereby, could modulate glycan biosynthesis and protein glycosylation. Can hydrolyze extracellular dinucleoside polyphosphates, including the vasoactive adenosine polyphosphates as well. In addition, displays an alkaline phosphodiesterase activity in vitro. The polypeptide is Ectonucleotide pyrophosphatase/phosphodiesterase family member 3 (Mus musculus (Mouse)).